The primary structure comprises 333 residues: Taste receptor type 2 member 38 (333 aa).

Over 1–17 the chain is Extracellular; the sequence is MLTLTRIHTVSYEVRST. Residues 18–38 traverse the membrane as a helical segment; that stretch reads FLFISVLEFAVGFLTNAFVFL. The Cytoplasmic portion of the chain corresponds to 39-55; it reads VNFWDVVKRQPLSNSDC. The helical transmembrane segment at 56-76 threads the bilayer; the sequence is VLLCLSISRLFLHGLLFLSAI. Over 77–94 the chain is Extracellular; that stretch reads QLTHFQKLSEPLNHSYQA. The helical transmembrane segment at 95–115 threads the bilayer; it reads IIMLWMIANQANLWLAACLSL. Over 116-142 the chain is Cytoplasmic; the sequence is LYCSKLIRFSHTFLICLASWVSRKISQ. The helical transmembrane segment at 143-163 threads the bilayer; the sequence is MLLGIILCSCICTVLCVWCFF. The Extracellular portion of the chain corresponds to 164–190; it reads SRPHFTVTTVLFMNNNTRLNWQIKDLN. A glycan (N-linked (GlcNAc...) asparagine) is linked at Asn178. The chain crosses the membrane as a helical span at residues 191–211; sequence LFYSFLFCYLWSVPPFLLFLV. Over 212–251 the chain is Cytoplasmic; sequence SSGMLTVSLGRHMRTMKVYTRDSRDPSLEAHIKALKSLVS. Residues 252 to 272 form a helical membrane-spanning segment; sequence FFCFFVISSCAAFISVPLLIL. Topologically, residues 273 to 276 are extracellular; the sequence is WRDK. A helical membrane pass occupies residues 277-297; that stretch reads IGVMVCVGIMAACPSGHAAVL. Over 298–333 the chain is Cytoplasmic; the sequence is ISGNAKLRRAVTTILLWAQSSLKVRADHKADSRTLC.

Belongs to the G-protein coupled receptor T2R family.

The protein resides in the membrane. In terms of biological role, receptor that may play a role in the perception of bitterness and is gustducin-linked. May play a role in sensing the chemical composition of the gastrointestinal content. The activity of this receptor may stimulate alpha gustducin, mediate PLC-beta-2 activation and lead to the gating of TRPM5. In Pan troglodytes (Chimpanzee), this protein is Taste receptor type 2 member 38 (TAS2R38).